The following is a 171-amino-acid chain: Putative phosphoesterase ABC1741 (171 aa).

The active-site Proton donor is histidine 34. 2 consecutive short sequence motifs (HXTX) follow at residues 34–37 and 116–119; these read HITL and HITI. Catalysis depends on histidine 116, which acts as the Proton acceptor.

Belongs to the 2H phosphoesterase superfamily. YjcG family.

This Shouchella clausii (strain KSM-K16) (Alkalihalobacillus clausii) protein is Putative phosphoesterase ABC1741.